The chain runs to 397 residues: Acetyl-CoA acetyltransferase, cytosolic (397 aa).

Residue Met-1 is modified to N-acetylmethionine. Cys-92 acts as the Acyl-thioester intermediate in catalysis. Position 200 is an N6-acetyllysine (Lys-200). CoA contacts are provided by Arg-223 and Ser-226. 2 positions are modified to N6-acetyllysine: Lys-233 and Lys-235. Residue Ser-252 coordinates CoA. Cys-383 functions as the Proton donor/acceptor in the catalytic mechanism.

This sequence belongs to the thiolase-like superfamily. Thiolase family. In terms of assembly, homotetramer.

It localises to the cytoplasm. The protein localises to the cytosol. It carries out the reaction 2 acetyl-CoA = acetoacetyl-CoA + CoA. Its pathway is lipid metabolism; fatty acid metabolism. Involved in the biosynthetic pathway of cholesterol. This is Acetyl-CoA acetyltransferase, cytosolic (Acat2) from Rattus norvegicus (Rat).